A 302-amino-acid chain; its full sequence is Protein FdhE homolog (302 aa).

This sequence belongs to the FdhE family.

The protein resides in the cytoplasm. Necessary for formate dehydrogenase activity. The chain is Protein FdhE homolog from Haemophilus influenzae (strain PittGG).